The following is a 493-amino-acid chain: Activin receptor type-1C (493 aa).

The N-terminal stretch at 1 to 20 (MTRALCSALRQALLLLAAAA) is a signal peptide. The Extracellular portion of the chain corresponds to 22-113 (LSPGLKCVCL…PNAPKLGPME (92 aa)). The helical transmembrane segment at 114–134 (LAIIITVPVCLLSIAAMLTVW) threads the bilayer. Topologically, residues 135-493 (ACQGRQCSYR…QLCVKEDCKA (359 aa)) are cytoplasmic. A GS domain is found at 165 to 194 (KTLKDLIYDVTASGSGSGLPLLVQRTIART). A Protein kinase domain is found at 195-485 (IVLQEIVGKG…LRIKKTISQL (291 aa)). Residues 201-209 (VGKGRFGEV) and K222 each bind ATP. D323 functions as the Proton acceptor in the catalytic mechanism.

The protein belongs to the protein kinase superfamily. TKL Ser/Thr protein kinase family. TGFB receptor subfamily. In terms of assembly, binds the type 2 receptor protein ACVR2A. Requires Mg(2+) as cofactor. It depends on Mn(2+) as a cofactor. As to expression, present in pancreas, heart, colon, small intestine, ovary and the hippocampus, medulla oblongata and putamen of the brain. Isoform 1, isoform 2, isoform 3 and isoform 4 are all expressed in the placenta throughout pregnancy.

It is found in the membrane. It catalyses the reaction L-threonyl-[receptor-protein] + ATP = O-phospho-L-threonyl-[receptor-protein] + ADP + H(+). The enzyme catalyses L-seryl-[receptor-protein] + ATP = O-phospho-L-seryl-[receptor-protein] + ADP + H(+). Serine/threonine protein kinase which forms a receptor complex on ligand binding. The receptor complex consists of 2 type II and 2 type I transmembrane serine/threonine kinases. Type II receptors phosphorylate and activate type I receptors which autophosphorylate, then bind and activate SMAD transcriptional regulators, SMAD2 and SMAD3. Receptor for activin AB, activin B, activin E and NODAL. Upon NODAL binding, activation results in increased apoptosis and reduced proliferation through suppression of AKT signaling and the activation of Smad2-dependent signaling pathway in pancreatic beta-cells, trophoblasts, epithelial or neuronal cells. Acts as a positive regulator for macrophage activation partially through down-regulation of PPARG expression. This Homo sapiens (Human) protein is Activin receptor type-1C.